Reading from the N-terminus, the 607-residue chain is Protein PLASTID MOVEMENT IMPAIRED 2 (607 aa).

Coiled-coil stretches lie at residues 66 to 295 and 329 to 445; these read KAKK…NAEL and MLER…ESRR.

This sequence belongs to the WEB family. In terms of assembly, interacts with WEB1. As to expression, ubiquitous but preferentially in chloroplast-containing tissues.

The protein localises to the cytoplasm. Its function is as follows. Required for the chloroplast avoidance response under high intensity blue light. This avoidance response consists in the relocation of chloroplasts on the anticlinal side of exposed cells. Acts in association with WEB1 to maintain the velocity of chloroplast photorelocation movement via cp-actin filaments regulation. The sequence is that of Protein PLASTID MOVEMENT IMPAIRED 2 (PMI2) from Arabidopsis thaliana (Mouse-ear cress).